Reading from the N-terminus, the 197-residue chain is Nucleoside triphosphate pyrophosphatase (197 aa).

The active-site Proton acceptor is D70.

Belongs to the Maf family. It depends on a divalent metal cation as a cofactor.

The protein localises to the cytoplasm. The enzyme catalyses a ribonucleoside 5'-triphosphate + H2O = a ribonucleoside 5'-phosphate + diphosphate + H(+). The catalysed reaction is a 2'-deoxyribonucleoside 5'-triphosphate + H2O = a 2'-deoxyribonucleoside 5'-phosphate + diphosphate + H(+). Its function is as follows. Nucleoside triphosphate pyrophosphatase. May have a dual role in cell division arrest and in preventing the incorporation of modified nucleotides into cellular nucleic acids. The polypeptide is Nucleoside triphosphate pyrophosphatase (yhdE) (Shigella flexneri).